Reading from the N-terminus, the 29-residue chain is Lambda-theraphotoxin-Ec2b (29 aa).

Intrachain disulfides connect C2–C16, C9–C21, and C15–C25.

The protein belongs to the neurotoxin 30 (phrixotoxin) family. In terms of tissue distribution, expressed by the venom gland.

The protein localises to the secreted. Functionally, insect-selective neurotoxin that potently blocks insect calcium-activated potassium (BKCa) channels (Slo-type) in cockroach dorsal unpaired median (DUM) neurons (IC(50)=25.3 nM). This occurs in the absence of any shifts in the voltage dependence of activation. May interact with the turret and/or loop region of the external entrance to the channel and does not project deeply into the pore of the channel. In vivo, does not show toxicity in mice after intracerebroventricular injection of up to 25 pmol/g (1.8 ug/20 g mouse). This is Lambda-theraphotoxin-Ec2b from Eucratoscelus constrictus (African red-rump baboon spider).